The chain runs to 413 residues: RNA-binding protein 41 (413 aa).

A disordered region spans residues serine 225 to lysine 247. The region spanning lysine 309–serine 387 is the RRM domain.

May bind RNA. The polypeptide is RNA-binding protein 41 (Rbm41) (Mus musculus (Mouse)).